Consider the following 211-residue polypeptide: tRNA (guanine-N(7)-)-methyltransferase (211 aa).

The S-adenosyl-L-methionine site is built by E44, D69, D96, and D118. The active site involves D118. Residue K122 participates in substrate binding. The interaction with RNA stretch occupies residues 124-129 (KHEKRR). Substrate-binding positions include D154 and 191–194 (TEYE).

The protein belongs to the class I-like SAM-binding methyltransferase superfamily. TrmB family.

It carries out the reaction guanosine(46) in tRNA + S-adenosyl-L-methionine = N(7)-methylguanosine(46) in tRNA + S-adenosyl-L-homocysteine. The protein operates within tRNA modification; N(7)-methylguanine-tRNA biosynthesis. Functionally, catalyzes the formation of N(7)-methylguanine at position 46 (m7G46) in tRNA. This Streptococcus pyogenes serotype M12 (strain MGAS2096) protein is tRNA (guanine-N(7)-)-methyltransferase.